The primary structure comprises 434 residues: Probable oxaloacetate decarboxylase beta chain (434 aa).

9 helical membrane-spanning segments follow: residues 13–35 (IMHL…WLAI), 122–144 (VLAL…FMGV), 159–181 (TLLL…LLLN), 186–208 (ISFT…PTAI), 223–245 (AVAA…RALT), 266–288 (ILFP…PLLG), 308–327 (TAQN…AVGS), 339–361 (TLGI…VIMA), and 403–425 (FLLM…AAGV).

It belongs to the GcdB/MmdB/OadB family. In terms of assembly, heterotrimer of an alpha, a beta and a gamma subunit. Na(+) is required as a cofactor.

It is found in the cell membrane. The catalysed reaction is oxaloacetate + 2 Na(+)(in) + H(+) = pyruvate + 2 Na(+)(out) + CO2. Its function is as follows. Catalyzes the decarboxylation of oxaloacetate coupled to Na(+) translocation. This is Probable oxaloacetate decarboxylase beta chain (oadB) from Pasteurella multocida (strain Pm70).